The primary structure comprises 504 residues: Pentatricopeptide repeat-containing protein At5g16640, mitochondrial (504 aa).

The N-terminal 43 residues, 1 to 43 (MRRSISSKAKSFLHRNLLYSGNSGTSPSSSFSICGFCFSRRAY), are a transit peptide targeting the mitochondrion. 13 PPR repeats span residues 45–79 (NGSDYREMLRNGIRFMKLDDSLDLFFHMVQCRPLP), 80–114 (SIADFSRLLSAISKMKKYDVVIYLWEQMQMLGIPH), 115–149 (NLCTCNILLNCFCRCSQLSLALSFLGKMIKLGHEP), 150–184 (SIVTFGSLLNGFCRGDRVYDALYMFDQMVGMGYKP), 185–219 (NVVIYNTIIDGLCKSKQVDNALDLLNRMEKDGIGP), 220–254 (DVVTYNSLISGLCSSGRWSDATRMVSCMTKREIYP), 255–289 (DVFTFNALIDACVKEGRVSEAEEFYEEMIRRSLDP), 290–324 (DIVTYSLLIYGLCMYSRLDEAEEMFGFMVSKGCFP), 325–359 (DVVTYSILINGYCKSKKVEHGMKLFCEMSQRGVVR), 360–394 (NTVTYTILIQGYCRAGKLNVAEEIFRRMVFCGVHP), 395–429 (NIITYNVLLHGLCDNGKIEKALVILADMQKNGMDA), 430–464 (DIVTYNIIIRGMCKAGEVADAWDIYCSLNCQGLMP), and 465–499 (DIWTYTTMMLGLYKKGLRREADALFRKMKEDGILP).

Belongs to the PPR family. P subfamily.

It localises to the mitochondrion. This Arabidopsis thaliana (Mouse-ear cress) protein is Pentatricopeptide repeat-containing protein At5g16640, mitochondrial.